The sequence spans 236 residues: MTKRYWNINLEEMMEAGVHFGHGTRKWNPRMAPYISAKRKGIHITNLTRTARFLSETCDLVFDAASRGKHFLIVGTKSKAADLVALAAIRARCHYVNKKWLGGMLTNWSTTETRLHKFRDLRAEQRAGKLNCLPKRDAAMLKRKLSHLQTYLGGIKYMTGLPDIVIIVDQHEEYTALRECITLGIPTICLIDTNCDPDLSDISIPANDDAIASIRLILNKLVSALCEGHSSYIRNR.

It belongs to the universal ribosomal protein uS2 family.

It is found in the plastid. It localises to the chloroplast. The protein is Small ribosomal subunit protein uS2c (rps2) of Piper cenocladum (Ant piper).